The following is a 409-amino-acid chain: Putative actin-fragmin kinase DDB_G0268812 (409 aa).

Residues 1–45 (MKTFRDFKKKIKNNNNNKNNKNNNINNNNSNNNKNNKNNNNNNSN) form a disordered region. Residues 5–46 (RDFKKKIKNNNNNKNNKNNNINNNNSNNNKNNKNNNNNNSNN) adopt a coiled-coil conformation. Low complexity predominate over residues 13-45 (NNNNNKNNKNNNINNNNSNNNKNNKNNNNNNSN).

Belongs to the protein kinase superfamily. AFK Ser/Thr protein kinase family.

In Dictyostelium discoideum (Social amoeba), this protein is Putative actin-fragmin kinase DDB_G0268812.